Here is a 146-residue protein sequence, read N- to C-terminus: Large ribosomal subunit protein bL19 (146 aa).

The disordered stretch occupies residues 116-146 (ADRKRIDQDRAAERAAKEEAQKAQEPKASQE). A compositionally biased stretch (basic and acidic residues) spans 119–146 (KRIDQDRAAERAAKEEAQKAQEPKASQE).

As to quaternary structure, part of the 50S risobomal subunit. Contacts protein L14. Forms a bridge to the 30S subunit in the 70S ribosome, contacting the 16S rRNA.

Functionally, contacts the 16S rRNA of the 30S subunit (part of bridge B6), connecting the 2 subunits. In Thermus thermophilus (strain ATCC 27634 / DSM 579 / HB8), this protein is Large ribosomal subunit protein bL19 (rplS).